The sequence spans 311 residues: Putative HTH-type transcriptional regulatory protein PTO0557 (311 aa).

The HTH cro/C1-type domain maps to 132–186; the sequence is MRRIRELKGYSVGYLSSKLGISRRSISLYESGSSATIDIYLKLEETLGEDLTKDI. Residues 143–162 constitute a DNA-binding region (H-T-H motif); the sequence is VGYLSSKLGISRRSISLYES.

This chain is Putative HTH-type transcriptional regulatory protein PTO0557, found in Picrophilus torridus (strain ATCC 700027 / DSM 9790 / JCM 10055 / NBRC 100828 / KAW 2/3).